The chain runs to 156 residues: Transcription antitermination protein NusB (156 aa).

It belongs to the NusB family.

Its function is as follows. Involved in transcription antitermination. Required for transcription of ribosomal RNA (rRNA) genes. Binds specifically to the boxA antiterminator sequence of the ribosomal RNA (rrn) operons. The sequence is that of Transcription antitermination protein NusB from Bartonella tribocorum (strain CIP 105476 / IBS 506).